Here is a 445-residue protein sequence, read N- to C-terminus: Protein PRRC1 (445 aa).

Disordered stretches follow at residues 1–71 (MMEE…PSAP) and 105–167 (PPVS…TGLL). A compositionally biased stretch (polar residues) spans 27 to 49 (MSSTPVPLAATSSFSSPNVSSME). Residues 59 to 71 (PQPPLPPVRPSAP) are compositionally biased toward pro residues. Phosphoserine is present on residues Ser-209 and Ser-408.

Belongs to the PRRC1 family. As to quaternary structure, interacts with PRKAR1A; resulting in PKA activation. In terms of tissue distribution, ubiquitously expressed with higher expression in kidney, liver and placenta. Detected in embryonic kidney cells (HEK293 cells) (at protein level). As to expression, specifically expressed in liver.

The protein resides in the golgi apparatus. The protein localises to the cytoplasm. Its function is as follows. May act as a regulator of the protein kinase A (PKA) activity during embryonic development. The sequence is that of Protein PRRC1 (PRRC1) from Homo sapiens (Human).